A 428-amino-acid chain; its full sequence is E3 ubiquitin-protein ligase RNF128 (428 aa).

The signal sequence occupies residues 1 to 38; that stretch reads MGPPPGAGVSCRGGCGFSRLLAWCFLLALSPQAPGSRG. N-linked (GlcNAc...) asparagine glycans are attached at residues Asn-48, Asn-59, and Asn-101. The PA domain occupies 75 to 183; it reads SPLEPVAGVL…LKGTKILQSI (109 aa). The helical transmembrane segment at 208–228 threads the bilayer; the sequence is IFFVSVSFFIITAATVGYFIF. The RING-type; atypical zinc-finger motif lies at 277-318; sequence CAVCIELYKPNDLVRILTCNHIFHKTCVDPWLLEHRTCPMCK. A disordered region spans residues 346–428; that stretch reads ISNSASSHEE…QETAVREIKS (83 aa). The span at 360–371 shows a compositional bias: polar residues; sequence ETASSGYASVQG.

In terms of processing, auto-ubiquitinated. Controls the development of T-cell clonal anergy by ubiquitination.

Its subcellular location is the cytoplasm. It localises to the endomembrane system. The protein localises to the cytoskeleton. The protein resides in the perinuclear region. It catalyses the reaction S-ubiquitinyl-[E2 ubiquitin-conjugating enzyme]-L-cysteine + [acceptor protein]-L-lysine = [E2 ubiquitin-conjugating enzyme]-L-cysteine + N(6)-ubiquitinyl-[acceptor protein]-L-lysine.. Its pathway is protein modification; protein ubiquitination. Functionally, E3 ubiquitin-protein ligase that catalyzes 'Lys-27', 'Lys-48'- or 'Lys-63'-linked polyubiquitin chains formation and plays a role in different biological processes such as modulation of immune response, cytoskeletal dynamics or protein homeostasis. Inhibits IL2 and IL4 transcription, thereby playing an important role in the induction of the anergic phenotype, a long-term stable state of T-lymphocyte unresponsiveness to antigenic stimulation associated with the blockade of interleukin production. Ubiquitinates ARPC5 with 'Lys-48' linkages and COR1A with 'Lys-63' linkages leading to their degradation, down-regulation of these cytoskeletal components results in impaired lamellipodium formation and reduced accumulation of F-actin at the immunological synapse. Functions in the patterning of the dorsal ectoderm; sensitizes ectoderm to respond to neural-inducing signals. Plays a positive role in innate immune response by promoting 'Lys-63'-linked ubiquitination of TBK1 after RNA- or DNA-virus infection. Regulates alveolar macrophage activation and neutrophil infiltration by interacting with TLR4, targeting it for degradation, and inhibiting NF-kappa-B activation, hence decreasing pro-inflammatory cytokines. Negatively regulates the IL-3/STAT5 signaling pathway by facilitating 'Lys-27'-linked polyubiquitination of IL3RA leading to its degradation via lysosomal pathway. Directly regulates the N-glycosylation process in the endoplasmic reticulum by targeting the glycosyl-transferase RPN1 for ubiquitination and degradation. Other substrates targeted for degradation by RNF128 include transmembrane proteins CD40L, CD83 or the tetraspanin CD151. This Homo sapiens (Human) protein is E3 ubiquitin-protein ligase RNF128 (RNF128).